The following is a 193-amino-acid chain: Acyl carrier protein phosphodiesterase (193 aa).

It belongs to the AcpH family.

It carries out the reaction holo-[ACP] + H2O = apo-[ACP] + (R)-4'-phosphopantetheine + H(+). In terms of biological role, converts holo-ACP to apo-ACP by hydrolytic cleavage of the phosphopantetheine prosthetic group from ACP. The polypeptide is Acyl carrier protein phosphodiesterase (Klebsiella pneumoniae subsp. pneumoniae (strain ATCC 700721 / MGH 78578)).